Here is a 237-residue protein sequence, read N- to C-terminus: uncharacterized protein (237 aa).

An N-terminal signal peptide occupies residues 1 to 28 (MVFSFSTFNRLVTFTVMAAIVSVRPLTA).

This is an uncharacterized protein from Sinorhizobium fredii (strain NBRC 101917 / NGR234).